The chain runs to 211 residues: ATP phosphoribosyltransferase (211 aa).

It belongs to the ATP phosphoribosyltransferase family. Short subfamily. Heteromultimer composed of HisG and HisZ subunits.

The protein localises to the cytoplasm. It carries out the reaction 1-(5-phospho-beta-D-ribosyl)-ATP + diphosphate = 5-phospho-alpha-D-ribose 1-diphosphate + ATP. The protein operates within amino-acid biosynthesis; L-histidine biosynthesis; L-histidine from 5-phospho-alpha-D-ribose 1-diphosphate: step 1/9. In terms of biological role, catalyzes the condensation of ATP and 5-phosphoribose 1-diphosphate to form N'-(5'-phosphoribosyl)-ATP (PR-ATP). Has a crucial role in the pathway because the rate of histidine biosynthesis seems to be controlled primarily by regulation of HisG enzymatic activity. The chain is ATP phosphoribosyltransferase from Hahella chejuensis (strain KCTC 2396).